A 257-amino-acid chain; its full sequence is MIDVQSRFDSRNIRVDKVGVKDIRYPITVMDKTNGIQHTVASVNMYVNLPREFKGTHMSRFIEILNEFHGNLDIREFPSILQSVQEHLSAESAHLELSFSYFIKKLSPVTGCAGLMEYGCRVAGSLDSNRGHDLVLEVNVPISTVCPCSKEISSYGAHNQRGMVRLAVRFKKFVWIEDLVRLVECAASSEVYSVLKRPDEKFVTESAFDNPKFVEDVVRDIAKELKADQNISWFLVDVENFESIHNHSAYACIERSK.

It belongs to the GTP cyclohydrolase IV family.

The catalysed reaction is GTP + H2O = 7,8-dihydroneopterin 3'-triphosphate + formate + H(+). It participates in cofactor biosynthesis; 7,8-dihydroneopterin triphosphate biosynthesis; 7,8-dihydroneopterin triphosphate from GTP: step 1/1. Converts GTP to 7,8-dihydroneopterin triphosphate. The polypeptide is GTP cyclohydrolase FolE2 (Syntrophobacter fumaroxidans (strain DSM 10017 / MPOB)).